A 1451-amino-acid chain; its full sequence is Glutamate receptor ionotropic, NMDA 2A (1451 aa).

The signal sequence occupies residues 1 to 20; the sequence is MGMFVLLLYTFLYAGDLGHG. At 21–547 the chain is on the extracellular side; that stretch reads AEKSFPVLNI…PSAFLEPFSA (527 aa). Residue asparagine 67 is glycosylated (N-linked (GlcNAc...) asparagine). The cysteines at positions 79 and 312 are disulfide-linked. Zn(2+) is bound by residues histidine 120, aspartate 258, and aspartate 274. Residues asparagine 332, asparagine 372, asparagine 435, and asparagine 436 are each glycosylated (N-linked (GlcNAc...) asparagine). Disulfide bonds link cysteine 421–cysteine 447 and cysteine 428–cysteine 448. L-glutamate contacts are provided by serine 503, threonine 505, and arginine 510. The N-linked (GlcNAc...) asparagine glycan is linked to asparagine 533. Residues 548-568 form a helical membrane-spanning segment; the sequence is SVWVMMFVMLLLVSAMAVFIF. At 569-592 the chain is on the cytoplasmic side; sequence EYFSPVGYNRNLAQGKDPHGPSFT. The tract at residues 591-612 is pore-forming; it reads FTIGKAVWLLWGLVFNNSVPVQ. The segment at residues 593-612 is an intramembrane region (discontinuously helical); it reads IGKAVWLLWGLVFNNSVPVQ. At 613–617 the chain is on the cytoplasmic side; it reads NPKGT. A helical transmembrane segment spans residues 618 to 637; it reads TSKIIVSIWAFFAVIFLASY. At 638 to 808 the chain is on the extracellular side; it reads TANLAAFMIQ…VMSSQLDIDN (171 aa). An N-linked (GlcNAc...) asparagine glycan is attached at asparagine 679. Residues serine 681, threonine 682, and aspartate 723 each contribute to the L-glutamate site. A disulfide bond links cysteine 737 and cysteine 792. A helical membrane pass occupies residues 809 to 829; sequence MAGVFYMLAAAMALSLITFVW. Topologically, residues 830–1451 are cytoplasmic; it reads EHLFYWKLRF…KKMPSLESDV (622 aa). The span at 1011–1022 shows a compositional bias: polar residues; the sequence is TLRQTQGSVNEN. 2 disordered regions span residues 1011 to 1080 and 1100 to 1165; these read TLRQ…VSAK and NRDK…GRLP. Basic and acidic residues-rich tracts occupy residues 1055–1073, 1100–1113, and 1138–1149; these read CHIDSENNNKHRKSKDNLK, NRDKVYTIDGDKEP, and YQDHNDNYRKTE.

Belongs to the glutamate-gated ion channel (TC 1.A.10.1) family. As to quaternary structure, heterotetramer. Forms heterotetrameric channels composed of two GluN1/zeta subunits (GRIN1), and two identical GluN2/epsilon subunits (GRIN2A, GRIN2B, GRIN2C or GRIN2D) or GluN3 subunits (GRIN3A or GRIN3B) (in vitro). In vivo, the subunit composition may depend on the expression levels of the different subunits.

Its subcellular location is the cell membrane. The protein localises to the postsynaptic cell membrane. It carries out the reaction Ca(2+)(in) = Ca(2+)(out). It catalyses the reaction Na(+)(in) = Na(+)(out). The catalysed reaction is K(+)(in) = K(+)(out). Component of N-methyl-D-aspartate (NMDA) receptors (NMDARs) that function as heterotetrameric, ligand-gated cation channels with high calcium permeability and voltage-dependent block by Mg(2+). MDARs participate in synaptic plasticity. Channel activation requires binding of the neurotransmitter L-glutamate to the GluN2 subunit, glycine binding to the GluN1 subunit, plus membrane depolarization to eliminate channel inhibition by Mg(2+). NMDARs mediate simultaneously the potasium efflux and the influx of calcium and sodium. Each GluN2 subunit confers differential attributes to channel properties, including activation, deactivation and desensitization kinetics, pH sensitivity, Ca2(+) permeability, and binding to allosteric modulators. Plays a role in dendritic branching in brain neurons and in synaptic plasticity. The chain is Glutamate receptor ionotropic, NMDA 2A from Xenopus laevis (African clawed frog).